The following is a 940-amino-acid chain: Reticulon-3 (940 aa).

Residues 1–24 are compositionally biased toward low complexity; it reads MAESSAATQSPSVSSSSSGAEPST. 3 disordered regions span residues 1–32, 71–91, and 129–182; these read MAES…GGSP, SSEI…LGSH, and DIPC…ALDL. Ala2 is subject to N-acetylalanine. Residues 2 to 771 lie on the Cytoplasmic side of the membrane; the sequence is AESSAATQSP…KKTGFVFGTT (770 aa). A Phosphoserine modification is found at Ser31. 6 positions are modified to phosphoserine: Ser196, Ser204, Ser209, Ser212, Ser249, and Ser282. Disordered stretches follow at residues 314–335, 381–405, and 428–512; these read AKQQ…RSEH, KGYL…ISGS, and EVTE…LEGQ. Acidic residues predominate over residues 430–447; sequence TEVDSSGESDDTVIEDTT. Residues 472–490 show a composition bias toward basic and acidic residues; sequence TSERENKETTSHETVRSEM. Polar residues predominate over residues 491 to 512; sequence YENSEQQQAHAETPTQRSLEGQ. Ser508 is modified (phosphoserine). Position 572 is a phosphothreonine (Thr572). Phosphoserine occurs at positions 575, 576, and 652. Disordered stretches follow at residues 623 to 655 and 672 to 701; these read NKLS…SSDL and QVQA…SDIL. The span at 689–699 shows a compositional bias: polar residues; sequence DPQSGPQNSSD. The region spanning 752–940 is the Reticulon domain; the sequence is VHDLIFWRDV…LPGIAKKKAE (189 aa). The helical intramembrane region spans 772-795; the sequence is LIMLLSLAAFSVISVVSYLILALL. Over 796 to 852 the chain is Cytoplasmic; the sequence is SVTISFRVYKSVIQAVQKSEEGHPFKAYLDVDITLSSEAFHSYMNAAMVHVNKALKL. The helical intramembrane region spans 853 to 875; that stretch reads IIRLFLVEDLVDSLKLAVFMWLM. Over 876 to 879 the chain is Cytoplasmic; the sequence is TYVG. The helical intramembrane region spans 880 to 902; the sequence is AVFNGITLLILAELLVFSVPIVY. Residues 895–940 are interaction with FADD; it reads VFSVPIVYEKYKTQIDHYVGIARDQTKSIVEKIQAKLPGIAKKKAE. Over 903-940 the chain is Cytoplasmic; that stretch reads EKYKTQIDHYVGIARDQTKSIVEKIQAKLPGIAKKKAE. Residues 908-910 form an interaction with BACE1 region; it reads QID.

As to quaternary structure, homodimer. Interacts with RTN4. Isoform 2 interacts with BACE1, BACE2, BCL2 and FADD. Interacts with ATL2. Interacts with TMEM33. Interacts with ATL1. Interacts with ZFYVE27 and with KIF5A in a ZFYVE27-dependent manner. Interacts with RIGI. Interacts with TRIM25. In terms of tissue distribution, present in olfactory bulb, olfactory epithelium and retina (at protein level).

Its subcellular location is the endoplasmic reticulum membrane. The protein resides in the golgi apparatus membrane. May be involved in membrane trafficking in the early secretory pathway. Inhibits BACE1 activity and amyloid precursor protein processing. May induce caspase-8 cascade and apoptosis. May favor BCL2 translocation to the mitochondria upon endoplasmic reticulum stress. Induces the formation of endoplasmic reticulum tubules. Acts also as an inflammation-resolving regulator by interacting with both TRIM25 and RIGI, subsequently impairing RIGI 'Lys-63'-linked polyubiquitination leading to IRF3 and NF-kappa-B inhibition. This chain is Reticulon-3 (Rtn3), found in Rattus norvegicus (Rat).